The primary structure comprises 192 residues: Inosine triphosphate pyrophosphatase (192 aa).

10 to 15 (TGNANK) serves as a coordination point for ITP. E43 is a binding site for Mg(2+). Residues K56, 74–75 (DT), K91, 149–152 (FGWD), K173, and 178–179 (HR) each bind ITP.

This sequence belongs to the HAM1 NTPase family. As to quaternary structure, homodimer. Mg(2+) serves as cofactor. Requires Mn(2+) as cofactor.

The protein resides in the cytoplasm. The protein localises to the nucleus. It carries out the reaction ITP + H2O = IMP + diphosphate + H(+). The catalysed reaction is dITP + H2O = dIMP + diphosphate + H(+). The enzyme catalyses XTP + H2O = XMP + diphosphate + H(+). Its function is as follows. Pyrophosphatase that hydrolyzes non-canonical purine nucleotides such as inosine triphosphate (ITP), deoxyinosine triphosphate (dITP) or xanthosine 5'-triphosphate (XTP) to their respective monophosphate derivatives. The enzyme does not distinguish between the deoxy- and ribose forms. Probably excludes non-canonical purines from RNA and DNA precursor pools, thus preventing their incorporation into RNA and DNA and avoiding chromosomal lesions. The sequence is that of Inosine triphosphate pyrophosphatase from Candida glabrata (strain ATCC 2001 / BCRC 20586 / JCM 3761 / NBRC 0622 / NRRL Y-65 / CBS 138) (Yeast).